The chain runs to 185 residues: Ribosome-recycling factor (185 aa).

Belongs to the RRF family.

It is found in the cytoplasm. Functionally, responsible for the release of ribosomes from messenger RNA at the termination of protein biosynthesis. May increase the efficiency of translation by recycling ribosomes from one round of translation to another. This is Ribosome-recycling factor from Bacillus mycoides (strain KBAB4) (Bacillus weihenstephanensis).